The sequence spans 215 residues: Cytochrome b6 (215 aa).

The chain crosses the membrane as a helical span at residues 32–52 (IFYCLGGITLTCFLVQVATGF). C35 serves as a coordination point for heme c. 2 residues coordinate heme b: H86 and H100. Transmembrane regions (helical) follow at residues 90–110 (ASMMVLMMILHVFRVYLTGGF), 116–136 (LTWVTGVVLAVLTASFGVTGY), and 186–206 (LHTFVLPLLTAVFMLMHFPMI). Residues H187 and H202 each contribute to the heme b site.

It belongs to the cytochrome b family. PetB subfamily. In terms of assembly, the 4 large subunits of the cytochrome b6-f complex are cytochrome b6, subunit IV (17 kDa polypeptide, PetD), cytochrome f and the Rieske protein, while the 4 small subunits are PetG, PetL, PetM and PetN. The complex functions as a dimer. It depends on heme b as a cofactor. Heme c serves as cofactor.

Its subcellular location is the plastid. It is found in the chloroplast thylakoid membrane. Functionally, component of the cytochrome b6-f complex, which mediates electron transfer between photosystem II (PSII) and photosystem I (PSI), cyclic electron flow around PSI, and state transitions. In Agrostis stolonifera (Creeping bentgrass), this protein is Cytochrome b6.